Consider the following 208-residue polypeptide: N-(5'-phosphoribosyl)anthranilate isomerase (208 aa).

This sequence belongs to the TrpF family.

The catalysed reaction is N-(5-phospho-beta-D-ribosyl)anthranilate = 1-(2-carboxyphenylamino)-1-deoxy-D-ribulose 5-phosphate. It participates in amino-acid biosynthesis; L-tryptophan biosynthesis; L-tryptophan from chorismate: step 3/5. This chain is N-(5'-phosphoribosyl)anthranilate isomerase, found in Nitrosospira multiformis (strain ATCC 25196 / NCIMB 11849 / C 71).